The sequence spans 221 residues: Orotate phosphoribosyltransferase (221 aa).

Lysine 26 is a binding site for 5-phospho-alpha-D-ribose 1-diphosphate. Residue 34-35 coordinates orotate; that stretch reads FF. 5-phospho-alpha-D-ribose 1-diphosphate is bound by residues 72 to 73, arginine 99, lysine 100, lysine 103, histidine 105, and 124 to 132; these read YK and DDVITAGTA. Orotate is bound by residues threonine 128 and arginine 156.

The protein belongs to the purine/pyrimidine phosphoribosyltransferase family. PyrE subfamily. As to quaternary structure, homodimer. Mg(2+) is required as a cofactor.

It catalyses the reaction orotidine 5'-phosphate + diphosphate = orotate + 5-phospho-alpha-D-ribose 1-diphosphate. The protein operates within pyrimidine metabolism; UMP biosynthesis via de novo pathway; UMP from orotate: step 1/2. Catalyzes the transfer of a ribosyl phosphate group from 5-phosphoribose 1-diphosphate to orotate, leading to the formation of orotidine monophosphate (OMP). The polypeptide is Orotate phosphoribosyltransferase (Colwellia psychrerythraea (strain 34H / ATCC BAA-681) (Vibrio psychroerythus)).